A 235-amino-acid polypeptide reads, in one-letter code: MAREECKALLDGLNKTTACYHHLVLTVGGSADSQNLRQELQKTRQKAQELAVSTCARLTAVLRDRGLAADERAEFERLWVAFSGCLDLLEADMRRALELGAAFPLHAPRRPLVRTGVAGASSGVAARALSTRSLRLEAEGDFDVADLRELEREVLQVGEMIDNMEMKVNVPRWTVQARQAAGAELLSTVSAGPSSVVSLQERGGGCDPRKALAAILFGAVLLAAVALAVCVAKLS.

The Cytoplasmic segment spans residues 1-210; the sequence is MAREECKALL…ERGGGCDPRK (210 aa). Coiled-coil stretches lie at residues 29-54 and 144-169; these read GSAD…AVST and VADL…MKVN. The tract at residues 153-200 is SNARE-like; sequence EVLQVGEMIDNMEMKVNVPRWTVQARQAAGAELLSTVSAGPSSVVSLQ. Residues 211-231 form a helical; Anchor for type IV membrane protein membrane-spanning segment; that stretch reads ALAAILFGAVLLAAVALAVCV. The Extracellular segment spans residues 232–235; the sequence is AKLS.

It belongs to the RGS7BP/RGS9BP family. In terms of assembly, specifically interacts with isoform RGS9-1 of RGS9. Component of the RGS9-1-Gbeta5 complex composed of RGS9-1, Gbeta5 (GNB5) and RGS9BP.

It is found in the membrane. Functionally, regulator of G protein-coupled receptor (GPCR) signaling in phototransduction. Participates in the recovery phase of visual transduction via its interaction with RGS9-1 isoform. Acts as a membrane-anchor that mediates the targeting of RGS9-1 to the photoreceptor outer segment, where phototransduction takes place. Enhances the ability of RGS9-1 to stimulate G protein GTPase activity, allowing the visual signal to be terminated on the physiologically time scale. It also controls the proteolytic stability of RGS9-1, probably by protecting it from degradation. This chain is Regulator of G-protein signaling 9-binding protein (RGS9BP), found in Homo sapiens (Human).